The sequence spans 450 residues: Tubulin alpha-1 chain (450 aa).

The GTP site is built by Gln11, Glu71, Gly144, Thr145, Thr179, Asn206, and Asn228. Residue Glu71 participates in Mg(2+) binding. The active site involves Glu254.

The protein belongs to the tubulin family. In terms of assembly, dimer of alpha and beta chains. A typical microtubule is a hollow water-filled tube with an outer diameter of 25 nm and an inner diameter of 15 nM. Alpha-beta heterodimers associate head-to-tail to form protofilaments running lengthwise along the microtubule wall with the beta-tubulin subunit facing the microtubule plus end conferring a structural polarity. Microtubules usually have 13 protofilaments but different protofilament numbers can be found in some organisms and specialized cells. Mg(2+) serves as cofactor. Undergoes a tyrosination/detyrosination cycle, the cyclic removal and re-addition of a C-terminal tyrosine residue by the enzymes tubulin tyrosine carboxypeptidase (TTCP) and tubulin tyrosine ligase (TTL), respectively.

The protein localises to the cytoplasm. The protein resides in the cytoskeleton. It catalyses the reaction GTP + H2O = GDP + phosphate + H(+). Its function is as follows. Tubulin is the major constituent of microtubules, a cylinder consisting of laterally associated linear protofilaments composed of alpha- and beta-tubulin heterodimers. Microtubules grow by the addition of GTP-tubulin dimers to the microtubule end, where a stabilizing cap forms. Below the cap, tubulin dimers are in GDP-bound state, owing to GTPase activity of alpha-tubulin. The chain is Tubulin alpha-1 chain (TUBA1) from Oryza sativa subsp. japonica (Rice).